A 428-amino-acid polypeptide reads, in one-letter code: Lysophosphatidic acid phosphatase type 6 (428 aa).

A mitochondrion-targeting transit peptide spans 1–32; that stretch reads MITGVFSMRLWTPVGVLTSLAYCLHQRRVALA. A substrate binding region spans residues 58–168; sequence RHGARSPLKP…VFIRSTNIFR (111 aa). Residue histidine 59 is the Nucleophile of the active site. The Proton donor role is filled by aspartate 335.

It belongs to the histidine acid phosphatase family. In terms of assembly, monomer. As to expression, highly expressed in kidney, heart, small intestine, muscle, liver, prostate, testis, ovary and weakly expressed in thymus and colon.

The protein localises to the mitochondrion. It carries out the reaction a phosphate monoester + H2O = an alcohol + phosphate. The enzyme catalyses 1-(9Z-octadecenoyl)-sn-glycero-3-phosphate + H2O = 1-(9Z-octadecenoyl)-sn-glycerol + phosphate. Functionally, hydrolyzes lysophosphatidic acid (LPA) containing a medium length fatty acid chain to the corresponding monoacylglycerol. Has highest activity with lysophosphatidic acid containing myristate (C14:0), monounsaturated oleate (C18:1) or palmitate (C16:0), and lower activity with C18:0 and C6:0 lysophosphatidic acid. The chain is Lysophosphatidic acid phosphatase type 6 (ACP6) from Homo sapiens (Human).